The chain runs to 157 residues: MYSIEVRTHSALHVVKGAVVKVLGSEAKWTYSTYVKGNKGVLIVKFDRKPSDEEIREIERLANEKVKENAPIKIYELPREEAEKMFGEDMYDLFPVPEDVRILKVVVIEDWNVNACNKEHTKTTGEIGPIKIRKVRFRKSKGLLEIHFELLELENPS.

Residues His-9, His-13, Cys-116, and His-120 each contribute to the Zn(2+) site.

Belongs to the class-II aminoacyl-tRNA synthetase family. Editing domain AlaX-S subfamily. As to quaternary structure, monomer and homodimer; the dimer is less active in tRNA editing and does not have a zinc ion associated with it. Another report shows only a monomeric form. The cofactor is Zn(2+).

It localises to the cytoplasm. Functionally, functions in trans to edit the amino acid moiety from mischarged charged Ser-tRNA(Ala). Has little activity against Gly-tRNA(Ala). In Pyrococcus horikoshii (strain ATCC 700860 / DSM 12428 / JCM 9974 / NBRC 100139 / OT-3), this protein is Alanyl-tRNA editing protein AlaX-S (alaXS).